We begin with the raw amino-acid sequence, 203 residues long: Eukaryotic translation initiation factor isoform 4E (203 aa).

Residues methionine 1–alanine 25 are compositionally biased toward low complexity. The tract at residues methionine 1–serine 27 is disordered. MRNA is bound by residues glutamine 47–glycine 52, lysine 79, and tryptophan 97–glutamate 98. An intrachain disulfide couples cysteine 102 to cysteine 141. MRNA is bound at residue arginine 148 to lysine 153.

This sequence belongs to the eukaryotic initiation factor 4E family. As to quaternary structure, EIF4F is a multi-subunit complex, the composition of which varies with external and internal environmental conditions. It is composed of at least EIF4A, EIF4E and EIF4G. EIF4E is also known to interact with other partners. In higher plants two isoforms of EIF4F have been identified, named isoform EIF4F and isoform EIF(iso)4F. Isoform EIF4F has subunits p220 and p26, whereas isoform EIF(iso)4F has subunits p82 and p28. (Microbial infection) Interacts with the potyvirus peanut stripe virus (PStV) helper component proteinase (HC-Pro) in the cytoplasm and with PStV viral genome-linked protein (VPg) in the nucleus; these interactions are possible in susceptible hosts but impaired in resistant plants. Post-translationally, according to the redox status, the Cys-102-Cys-141 disulfide bridge may have a role in regulating protein function by affecting its ability to bind capped mRNA. In terms of tissue distribution, expressed ubiquitously with highest levels in young leaves and roots, and lowest levels in flowers.

Its subcellular location is the cytoplasm. The protein localises to the nucleus. In terms of biological role, component of the protein complex eIF4F, which is involved in the recognition of the mRNA cap, ATP-dependent unwinding of 5'-terminal secondary structure and recruitment of mRNA to the ribosome. Recognizes and binds the 7-methylguanosine-containing mRNA cap during an early step in the initiation of protein synthesis and facilitates ribosome binding by inducing the unwinding of the mRNAs secondary structures. Key component of recessive resistance to potyviruses such as peanut stripe virus (PStV). Its function is as follows. (Microbial infection) Susceptibility host factor required for viral infection by recruiting viral RNAs to the host ribosomal complex via an interaction with viral genome-linked protein (VPg). The chain is Eukaryotic translation initiation factor isoform 4E from Arachis hypogaea (Peanut).